A 228-amino-acid chain; its full sequence is Cytidylate kinase (228 aa).

Position 10–18 (10–18) interacts with ATP; the sequence is GPSGSGKGT.

This sequence belongs to the cytidylate kinase family. Type 1 subfamily.

It is found in the cytoplasm. The catalysed reaction is CMP + ATP = CDP + ADP. The enzyme catalyses dCMP + ATP = dCDP + ADP. The chain is Cytidylate kinase from Acinetobacter baumannii (strain SDF).